The primary structure comprises 216 residues: Adenylate kinase (216 aa).

Residue 10–15 (GAGKGT) coordinates ATP. An NMP region spans residues 30–59 (STGDMLRAAVSAQTEVGKRAKAVMDAGKLV). Residues threonine 31, arginine 36, 57-59 (KLV), 85-88 (GFPR), and glutamine 92 contribute to the AMP site. The LID stretch occupies residues 126–163 (GRYTCANCGTGYHDENLKPKVEGVCDKCGSTHFKRRPD). Position 127 (arginine 127) interacts with ATP. Zn(2+)-binding residues include cysteine 130, cysteine 133, cysteine 150, and cysteine 153. Arginine 160 and arginine 172 together coordinate AMP. Alanine 200 serves as a coordination point for ATP.

Belongs to the adenylate kinase family. In terms of assembly, monomer.

The protein localises to the cytoplasm. The catalysed reaction is AMP + ATP = 2 ADP. It functions in the pathway purine metabolism; AMP biosynthesis via salvage pathway; AMP from ADP: step 1/1. Catalyzes the reversible transfer of the terminal phosphate group between ATP and AMP. Plays an important role in cellular energy homeostasis and in adenine nucleotide metabolism. This chain is Adenylate kinase, found in Allorhizobium ampelinum (strain ATCC BAA-846 / DSM 112012 / S4) (Agrobacterium vitis (strain S4)).